Reading from the N-terminus, the 292-residue chain is Peroxisomal 2,4-dienoyl-CoA reductase [(3E)-enoyl-CoA-producing] (292 aa).

Position 2 is an N-acetylalanine (A2). NADP(+)-binding positions include 35–40 (GGGSGI), 60–64 (RSLQK), and D86. R60 contributes to the substrate binding site. An N6-acetyllysine modification is found at K64. Substrate-binding positions include R88, F118, and 126-128 (SFN). N6-acetyllysine is present on K151. NADP(+) is bound by residues K182 and 208–214 (PGAISGT). Residue R219 coordinates substrate. S287 carries the post-translational modification Phosphoserine. A Microbody targeting signal motif is present at residues 290-292 (AKL). At K291 the chain carries N6-acetyllysine.

This sequence belongs to the short-chain dehydrogenases/reductases (SDR) family. 2,4-dienoyl-CoA reductase subfamily. In terms of assembly, monomer, dimer and oligomer.

It localises to the peroxisome. It carries out the reaction a (2E,4Z)-dienoyl-CoA + NADPH + H(+) = a 4,5-saturated-(3E)-enoyl-CoA + NADP(+). The catalysed reaction is a (2E,4E)-dienoyl-CoA + NADPH + H(+) = a 4,5-saturated-(3E)-enoyl-CoA + NADP(+). The enzyme catalyses (2E,4E)-hexadienoyl-CoA + NADPH + H(+) = (3E)-hexenoyl-CoA + NADP(+). It catalyses the reaction (2E,4E)-decadienoyl-CoA + NADPH + H(+) = (3E)-decenoyl-CoA + NADP(+). It carries out the reaction (2E,4Z,7Z,10Z,13Z,16Z,19Z)-docosaheptaenoyl-CoA + NADPH + H(+) = (3E,7Z,10Z,13Z,16Z,19Z)-docosahexaenoyl-CoA + NADP(+). In terms of biological role, auxiliary enzyme of beta-oxidation. Participates in the degradation of unsaturated fatty enoyl-CoA esters having double bonds in both even- and odd-numbered positions in peroxisome. Catalyzes the NADP-dependent reduction of 2,4-dienoyl-CoA to yield trans-3-enoyl-CoA. Has activity towards short and medium chain 2,4-dienoyl-CoAs, but also towards 2,4,7,10,13,16,19-docosaheptaenoyl-CoA, suggesting that it does not constitute a rate limiting step in the peroxisomal degradation of docosahexaenoic acid. This Mus musculus (Mouse) protein is Peroxisomal 2,4-dienoyl-CoA reductase [(3E)-enoyl-CoA-producing] (Decr2).